The primary structure comprises 229 residues: 2,3-bisphosphoglycerate-dependent phosphoglycerate mutase (229 aa).

Residues 7–14, 20–21, R59, 86–89, K97, 113–114, and 182–183 contribute to the substrate site; these read RHGQSEWN, TG, ERHY, RR, and GN. H8 acts as the Tele-phosphohistidine intermediate in catalysis. Catalysis depends on E86, which acts as the Proton donor/acceptor.

Belongs to the phosphoglycerate mutase family. BPG-dependent PGAM subfamily.

The catalysed reaction is (2R)-2-phosphoglycerate = (2R)-3-phosphoglycerate. The protein operates within carbohydrate degradation; glycolysis; pyruvate from D-glyceraldehyde 3-phosphate: step 3/5. Functionally, catalyzes the interconversion of 2-phosphoglycerate and 3-phosphoglycerate. This Listeria innocua serovar 6a (strain ATCC BAA-680 / CLIP 11262) protein is 2,3-bisphosphoglycerate-dependent phosphoglycerate mutase.